The chain runs to 498 residues: 3-octaprenyl-4-hydroxybenzoate carboxy-lyase (498 aa).

Asn-175 is a Mn(2+) binding site. Prenylated FMN contacts are provided by residues 178-180 (IYR), 192-194 (RWL), and 197-198 (RG). Glu-241 is a Mn(2+) binding site. The active-site Proton donor is the Asp-290.

Belongs to the UbiD family. As to quaternary structure, homohexamer. It depends on prenylated FMN as a cofactor. Mn(2+) is required as a cofactor.

It localises to the cell membrane. It carries out the reaction a 4-hydroxy-3-(all-trans-polyprenyl)benzoate + H(+) = a 2-(all-trans-polyprenyl)phenol + CO2. It functions in the pathway cofactor biosynthesis; ubiquinone biosynthesis. Functionally, catalyzes the decarboxylation of 3-octaprenyl-4-hydroxy benzoate to 2-octaprenylphenol, an intermediate step in ubiquinone biosynthesis. This is 3-octaprenyl-4-hydroxybenzoate carboxy-lyase from Yersinia pseudotuberculosis serotype I (strain IP32953).